The sequence spans 545 residues: CTP synthase (545 aa).

Positions 1–266 (MTTRYIFVTG…DDLVVKRFGL (266 aa)) are amidoligase domain. Position 14 (S14) interacts with CTP. Position 14 (S14) interacts with UTP. ATP contacts are provided by residues 15 to 20 (SLGKGI) and D72. Mg(2+) contacts are provided by D72 and E140. CTP contacts are provided by residues 147-149 (DIE), 187-192 (KTKPTQ), and K223. Residues 187–192 (KTKPTQ) and K223 each bind UTP. 239 to 241 (KDV) contributes to the ATP binding site. The Glutamine amidotransferase type-1 domain occupies 291-542 (VIGMVGKYIE…IAAASAHQKR (252 aa)). G352 is an L-glutamine binding site. C379 (nucleophile; for glutamine hydrolysis) is an active-site residue. Residues 380–383 (LGMQ), E403, and R470 contribute to the L-glutamine site. Active-site residues include H515 and E517.

The protein belongs to the CTP synthase family. Homotetramer.

The enzyme catalyses UTP + L-glutamine + ATP + H2O = CTP + L-glutamate + ADP + phosphate + 2 H(+). It carries out the reaction L-glutamine + H2O = L-glutamate + NH4(+). The catalysed reaction is UTP + NH4(+) + ATP = CTP + ADP + phosphate + 2 H(+). It functions in the pathway pyrimidine metabolism; CTP biosynthesis via de novo pathway; CTP from UDP: step 2/2. Allosterically activated by GTP, when glutamine is the substrate; GTP has no effect on the reaction when ammonia is the substrate. The allosteric effector GTP functions by stabilizing the protein conformation that binds the tetrahedral intermediate(s) formed during glutamine hydrolysis. Inhibited by the product CTP, via allosteric rather than competitive inhibition. Catalyzes the ATP-dependent amination of UTP to CTP with either L-glutamine or ammonia as the source of nitrogen. Regulates intracellular CTP levels through interactions with the four ribonucleotide triphosphates. The polypeptide is CTP synthase (Shewanella baltica (strain OS155 / ATCC BAA-1091)).